The sequence spans 558 residues: Dihydroxy-acid dehydratase (558 aa).

Residue Cys-51 coordinates [2Fe-2S] cluster. Mg(2+) is bound at residue Asp-83. Residue Cys-124 participates in [2Fe-2S] cluster binding. Mg(2+) is bound by residues Asp-125 and Lys-126. Lys-126 carries the post-translational modification N6-carboxylysine. Cys-196 is a binding site for [2Fe-2S] cluster. A Mg(2+)-binding site is contributed by Glu-447. The Proton acceptor role is filled by Ser-473.

The protein belongs to the IlvD/Edd family. Homodimer. [2Fe-2S] cluster serves as cofactor. The cofactor is Mg(2+).

It catalyses the reaction (2R)-2,3-dihydroxy-3-methylbutanoate = 3-methyl-2-oxobutanoate + H2O. The catalysed reaction is (2R,3R)-2,3-dihydroxy-3-methylpentanoate = (S)-3-methyl-2-oxopentanoate + H2O. It functions in the pathway amino-acid biosynthesis; L-isoleucine biosynthesis; L-isoleucine from 2-oxobutanoate: step 3/4. It participates in amino-acid biosynthesis; L-valine biosynthesis; L-valine from pyruvate: step 3/4. Functions in the biosynthesis of branched-chain amino acids. Catalyzes the dehydration of (2R,3R)-2,3-dihydroxy-3-methylpentanoate (2,3-dihydroxy-3-methylvalerate) into 2-oxo-3-methylpentanoate (2-oxo-3-methylvalerate) and of (2R)-2,3-dihydroxy-3-methylbutanoate (2,3-dihydroxyisovalerate) into 2-oxo-3-methylbutanoate (2-oxoisovalerate), the penultimate precursor to L-isoleucine and L-valine, respectively. In Flavobacterium psychrophilum (strain ATCC 49511 / DSM 21280 / CIP 103535 / JIP02/86), this protein is Dihydroxy-acid dehydratase.